Here is a 20-residue protein sequence, read N- to C-terminus: Insulin-like growth factor-binding protein 2 (20 aa).

In terms of domain architecture, IGFBP N-terminal spans 2–20 (LVFYCPKCTAERQTACPKL).

In terms of assembly, binds IGF2 more than IGF1. N-glycosylated.

It is found in the secreted. In terms of biological role, inhibits IGF-mediated growth and developmental rates. IGF-binding proteins prolong the half-life of the IGFs and have been shown to either inhibit or stimulate the growth promoting effects of the IGFs on cell culture. They alter the interaction of IGFs with their cell surface receptors. The chain is Insulin-like growth factor-binding protein 2 (igfbp2) from Oncorhynchus tshawytscha (Chinook salmon).